Here is a 499-residue protein sequence, read N- to C-terminus: Pentatricopeptide repeat-containing protein At5g61800 (499 aa).

PPR repeat units lie at residues 78–113 (STFC…SVPP), 114–150 (DFHT…GLLS), 151–181 (DLFT…NPQR), 182–212 (DVVT…MPLR), 213–247 (DLVS…GLKP), 248–282 (DNVA…RLFI), 283–313 (DSFL…CSDK), 314–348 (TLFT…GIKP), 349–379 (DGVT…MRSL), and 385–419 (EMKH…GGNR). The interval 424–499 (AWSGLLGGCR…KNVGFSKVLS (76 aa)) is type E motif.

Belongs to the PPR family. PCMP-E subfamily.

In Arabidopsis thaliana (Mouse-ear cress), this protein is Pentatricopeptide repeat-containing protein At5g61800 (PCMP-E8).